A 404-amino-acid chain; its full sequence is Cysteine desulfurase IscS (404 aa).

Pyridoxal 5'-phosphate-binding positions include 75–76 (AT), Asn-155, Gln-183, and 203–205 (SAH). N6-(pyridoxal phosphate)lysine is present on Lys-206. Residue Thr-243 participates in pyridoxal 5'-phosphate binding. Cys-328 (cysteine persulfide intermediate) is an active-site residue. Residue Cys-328 participates in [2Fe-2S] cluster binding.

The protein belongs to the class-V pyridoxal-phosphate-dependent aminotransferase family. NifS/IscS subfamily. As to quaternary structure, homodimer. Forms a heterotetramer with IscU, interacts with other sulfur acceptors. It depends on pyridoxal 5'-phosphate as a cofactor.

Its subcellular location is the cytoplasm. The enzyme catalyses (sulfur carrier)-H + L-cysteine = (sulfur carrier)-SH + L-alanine. It participates in cofactor biosynthesis; iron-sulfur cluster biosynthesis. In terms of biological role, master enzyme that delivers sulfur to a number of partners involved in Fe-S cluster assembly, tRNA modification or cofactor biosynthesis. Catalyzes the removal of elemental sulfur atoms from cysteine to produce alanine. Functions as a sulfur delivery protein for Fe-S cluster synthesis onto IscU, an Fe-S scaffold assembly protein, as well as other S acceptor proteins. The polypeptide is Cysteine desulfurase IscS (Vibrio cholerae serotype O1 (strain ATCC 39541 / Classical Ogawa 395 / O395)).